We begin with the raw amino-acid sequence, 440 residues long: D-serine dehydratase (440 aa).

Lys116 carries the N6-(pyridoxal phosphate)lysine modification.

The protein belongs to the serine/threonine dehydratase family. DsdA subfamily. Monomer. Pyridoxal 5'-phosphate is required as a cofactor.

It catalyses the reaction D-serine = pyruvate + NH4(+). The chain is D-serine dehydratase from Salmonella agona (strain SL483).